The primary structure comprises 417 residues: Serine hydroxymethyltransferase (417 aa).

(6S)-5,6,7,8-tetrahydrofolate contacts are provided by residues Leu-121 and 125-127 (GHL). At Lys-229 the chain carries N6-(pyridoxal phosphate)lysine. 355 to 357 (SPF) contacts (6S)-5,6,7,8-tetrahydrofolate.

This sequence belongs to the SHMT family. Homodimer. Pyridoxal 5'-phosphate is required as a cofactor.

Its subcellular location is the cytoplasm. It carries out the reaction (6R)-5,10-methylene-5,6,7,8-tetrahydrofolate + glycine + H2O = (6S)-5,6,7,8-tetrahydrofolate + L-serine. It functions in the pathway one-carbon metabolism; tetrahydrofolate interconversion. Its pathway is amino-acid biosynthesis; glycine biosynthesis; glycine from L-serine: step 1/1. Its function is as follows. Catalyzes the reversible interconversion of serine and glycine with tetrahydrofolate (THF) serving as the one-carbon carrier. This reaction serves as the major source of one-carbon groups required for the biosynthesis of purines, thymidylate, methionine, and other important biomolecules. Also exhibits THF-independent aldolase activity toward beta-hydroxyamino acids, producing glycine and aldehydes, via a retro-aldol mechanism. The sequence is that of Serine hydroxymethyltransferase from Buchnera aphidicola subsp. Baizongia pistaciae (strain Bp).